Reading from the N-terminus, the 201-residue chain is Cutinase (201 aa).

A signal peptide spans Met1–Ala20. A disulfide bridge links Cys31 with Cys105. Ser116 (nucleophile) is an active-site residue. Residues Cys164 and Cys171 are joined by a disulfide bond. Asp168 is an active-site residue. The Proton donor/acceptor role is filled by His181.

This sequence belongs to the cutinase family. Post-translationally, the 2 disulfide bonds play a critical role in holding the catalytic residues in juxta-position; reduction of the disulfide bridges results in the complete inactivation of the enzyme.

Its subcellular location is the secreted. The enzyme catalyses cutin + H2O = cutin monomers.. Catalyzes the hydrolysis of complex carboxylic polyesters found in the cell wall of plants. Degrades cutin, a macromolecule that forms the structure of the plant cuticle. Allows pathogenic fungi to penetrate through the cuticular barrier into the host plant during the initial stage of fungal infection. This chain is Cutinase (CUT1), found in Monilinia fructicola (Brown rot fungus).